A 138-amino-acid polypeptide reads, in one-letter code: Putative transcriptional regulatory protein NedR (138 aa).

Residues 1-25 are disordered; that stretch reads MCWGRSWTFGRSSSKGWRPTSSASS. A compositionally biased stretch (polar residues) spans 9–25; it reads FGRSSSKGWRPTSSASS.

Its function is as follows. May serve as a transcriptional regulator. The polypeptide is Putative transcriptional regulatory protein NedR (nedR) (Micromonospora viridifaciens).